A 98-amino-acid chain; its full sequence is Ribonuclease P protein component 4 (98 aa).

Cys62, Cys65, Cys85, and Cys88 together coordinate Zn(2+).

Belongs to the eukaryotic/archaeal RNase P protein component 4 family. In terms of assembly, consists of a catalytic RNA component and at least 4-5 protein subunits. Zn(2+) serves as cofactor.

The protein resides in the cytoplasm. It carries out the reaction Endonucleolytic cleavage of RNA, removing 5'-extranucleotides from tRNA precursor.. In terms of biological role, part of ribonuclease P, a protein complex that generates mature tRNA molecules by cleaving their 5'-ends. The protein is Ribonuclease P protein component 4 of Thermoplasma volcanium (strain ATCC 51530 / DSM 4299 / JCM 9571 / NBRC 15438 / GSS1).